We begin with the raw amino-acid sequence, 243 residues long: Probable transcriptional regulatory protein BDU_30 (243 aa).

It belongs to the TACO1 family.

It localises to the cytoplasm. The sequence is that of Probable transcriptional regulatory protein BDU_30 from Borrelia duttonii (strain Ly).